A 107-amino-acid chain; its full sequence is Flagellar transcriptional regulator FlhD (107 aa).

Belongs to the FlhD family. In terms of assembly, homodimer; disulfide-linked. Forms a heterohexamer composed of two FlhC and four FlhD subunits. Each FlhC binds a FlhD dimer, forming a heterotrimer, and a hexamer assembles by dimerization of two heterotrimers.

It localises to the cytoplasm. Its function is as follows. Functions in complex with FlhC as a master transcriptional regulator that regulates transcription of several flagellar and non-flagellar operons by binding to their promoter region. Activates expression of class 2 flagellar genes, including fliA, which is a flagellum-specific sigma factor that turns on the class 3 genes. Also regulates genes whose products function in a variety of physiological pathways. This chain is Flagellar transcriptional regulator FlhD, found in Bordetella pertussis (strain Tohama I / ATCC BAA-589 / NCTC 13251).